Here is a 337-residue protein sequence, read N- to C-terminus: Putative F-box protein At4g09870 (337 aa).

The F-box domain occupies 1-46 (MSISELSQDLLEEILCRVPAISLKKLRSTCKLWNSLFIDKRVRNEL).

This is Putative F-box protein At4g09870 from Arabidopsis thaliana (Mouse-ear cress).